A 276-amino-acid chain; its full sequence is UPF0276 protein PA4106 (276 aa).

It belongs to the UPF0276 family.

The chain is UPF0276 protein PA4106 from Pseudomonas aeruginosa (strain ATCC 15692 / DSM 22644 / CIP 104116 / JCM 14847 / LMG 12228 / 1C / PRS 101 / PAO1).